We begin with the raw amino-acid sequence, 715 residues long: ATP-dependent DNA helicase Hel308 (715 aa).

ATP contacts are provided by residues Q35 and 53–60; that span reads SPTGSGKT. The Helicase ATP-binding domain maps to 40–203; sequence KKGLLDGNRL…WLGAEPVATN (164 aa). The short motif at 152–155 is the DEAH box element; the sequence is DELH. One can recognise a Helicase C-terminal domain in the interval 236–442; it reads HGDDAIIAYT…ERAFYTFLLG (207 aa).

Belongs to the helicase family. Hel308 subfamily. Monomer. Interacts with PINA ATPase which decreases both DNA helicase activities of this protein.

The catalysed reaction is Couples ATP hydrolysis with the unwinding of duplex DNA by translocating in the 3'-5' direction.. The enzyme catalyses ATP + H2O = ADP + phosphate + H(+). It carries out the reaction Couples ATP hydrolysis with the unwinding of duplex DNA at the replication fork by translocating in the 5'-3' direction. This creates two antiparallel DNA single strands (ssDNA). The leading ssDNA polymer is the template for DNA polymerase III holoenzyme which synthesizes a continuous strand.. PINA inhibits the (weak) 5'-3' but not the 3'-5' helicase activity of this protein on overhang substrates. In terms of biological role, DNA-dependent ATPase and 3'-5' DNA helicase that may be involved in repair of stalled replication forks. Its function is as follows. Has predominantly 3'-5' helicase activity but also a weak 5'-3' helicase activity. Has the ability to unwind replication forks, preferentially removing the lagging strand. Hjc, Hjm (Hel308) and branch migration ATPase PINA coordinate HJ migration and cleavage of replication forks in a coordinated way. The chain is ATP-dependent DNA helicase Hel308 from Saccharolobus islandicus (strain REY15A) (Sulfolobus islandicus).